We begin with the raw amino-acid sequence, 78 residues long: Bowman-Birk type proteinase inhibitors I-A, I-B, and I-A' (78 aa).

Cystine bridges form between C18–C72, C19–C34, C22–C68, C24–C32, C42–C49, C46–C61, and C51–C59.

The protein belongs to the Bowman-Birk serine protease inhibitor family.

Its function is as follows. These inhibitors strongly inhibit trypsin. The sequence is that of Bowman-Birk type proteinase inhibitors I-A, I-B, and I-A' from Phaseolus angularis (Azuki bean).